A 91-amino-acid polypeptide reads, in one-letter code: Alpha-defensin-related sequence 2 (91 aa).

An N-terminal signal peptide occupies residues 1-19; it reads MKKLVLLFALVLLAFQVQA. The propeptide occupies 20–58; that stretch reads DSIQNTDEETKTEEQPGEKDQAVSVSFGDPQGSALQDAA. The segment at 22 to 48 is disordered; it reads IQNTDEETKTEEQPGEKDQAVSVSFGD. A compositionally biased stretch (basic and acidic residues) spans 27–40; the sequence is EETKTEEQPGEKDQ. 7 repeat units span residues 65–67, 68–70, 71–73, 74–76, 77–79, 80–82, and 83–85. The 7 X 3 AA tandem repeats of C-P-X stretch occupies residues 65–85; it reads CPQCPRCPSCPSCPRCPRCPR.

The protein belongs to the alpha-defensin family. As to expression, small bowel, spleen, colon, kidney, liver, stomach and femur marrow.

It localises to the secreted. Apparent precursor of a secreted, cationic, proline- and cysteine-rich peptide that contains Cys-Pro-Xaa repeats. Unlike cryptdin, the proposed mature peptide region lacks the structural motif characteristic of defensins. It may have microbicidal activities. The polypeptide is Alpha-defensin-related sequence 2 (Defa-rs2) (Mus musculus (Mouse)).